Here is a 192-residue protein sequence, read N- to C-terminus: Protein Syd (192 aa).

It belongs to the Syd family.

The protein resides in the cell inner membrane. In terms of biological role, interacts with the SecY protein in vivo. May bind preferentially to an uncomplexed state of SecY, thus functioning either as a chelating agent for excess SecY in the cell or as a regulatory factor that negatively controls the translocase function. In Hahella chejuensis (strain KCTC 2396), this protein is Protein Syd.